The primary structure comprises 95 residues: Cell division protein FtsB (95 aa).

At 1 to 3 the chain is on the cytoplasmic side; that stretch reads MRL. A helical membrane pass occupies residues 4 to 21; the sequence is FILILSAILLLFQYDLWF. Residues 22–95 are Periplasmic-facing; that stretch reads GKNGYLDYKE…RIAKENKDNR (74 aa). The stretch at 28–62 forms a coiled coil; the sequence is DYKETAEEIAMHKAENTKLSQRNQVVAAEIRDLKD.

Belongs to the FtsB family. As to quaternary structure, part of a complex composed of FtsB, FtsL and FtsQ.

Its subcellular location is the cell inner membrane. In terms of biological role, essential cell division protein. May link together the upstream cell division proteins, which are predominantly cytoplasmic, with the downstream cell division proteins, which are predominantly periplasmic. This chain is Cell division protein FtsB, found in Mannheimia succiniciproducens (strain KCTC 0769BP / MBEL55E).